The sequence spans 283 residues: Large ribosomal subunit protein uL2 (283 aa).

Disordered stretches follow at residues 37 to 59 (AKKK…RGGG) and 219 to 283 (HKGI…RNSK). The span at 256–269 (WGKRHMGVKTRNNK) shows a compositional bias: basic residues.

Belongs to the universal ribosomal protein uL2 family. As to quaternary structure, part of the 50S ribosomal subunit. Forms a bridge to the 30S subunit in the 70S ribosome.

One of the primary rRNA binding proteins. Required for association of the 30S and 50S subunits to form the 70S ribosome, for tRNA binding and peptide bond formation. It has been suggested to have peptidyltransferase activity; this is somewhat controversial. Makes several contacts with the 16S rRNA in the 70S ribosome. This Mycoplasmoides gallisepticum (strain R(low / passage 15 / clone 2)) (Mycoplasma gallisepticum) protein is Large ribosomal subunit protein uL2.